The primary structure comprises 382 residues: ORC1-type DNA replication protein 1 (382 aa).

ATP contacts are provided by residues 63–67 (TGKTA), tyrosine 205, and arginine 217.

Belongs to the CDC6/cdc18 family. As to quaternary structure, monomer. Interacts with MCM via the WH domain. Post-translationally, autophosphorylated on a serine. Phosphorylation is stimulated by binding to MCM. Both single-stranded DNA and double-stranded DNA inhibit the phosphorylation reaction.

Its function is as follows. Involved in regulation of DNA replication. May play an essential role in origin recognition. Binds to DNA, with a preference for origin-specific double-stranded sequences. Does not bind single-stranded DNA. Inhibits MCM helicase activity but does not affect its oligomeric state. The polypeptide is ORC1-type DNA replication protein 1 (cdc6-1) (Methanothermobacter thermautotrophicus (strain ATCC 29096 / DSM 1053 / JCM 10044 / NBRC 100330 / Delta H) (Methanobacterium thermoautotrophicum)).